Consider the following 347-residue polypeptide: Fructose-1,6-bisphosphatase (347 aa).

AMP is bound by residues 19–23 (ILQEQ) and 44–48 (SGELS). The Mg(2+) site is built by aspartate 85 and glutamate 114. Residue 127–128 (SY) participates in AMP binding. Residues aspartate 133, isoleucine 135, and aspartate 136 each coordinate Mg(2+). 136 to 139 (DGSS) serves as a coordination point for substrate. Lysine 155 provides a ligand contact to AMP. Substrate-binding positions include 227–230 (NEGY), 258–263 (RYIGSM), tyrosine 279, and 288–290 (KLR). Glutamate 294 is a Mg(2+) binding site.

Belongs to the FBPase class 1 family. Homotetramer. Mg(2+) serves as cofactor.

The enzyme catalyses beta-D-fructose 1,6-bisphosphate + H2O = beta-D-fructose 6-phosphate + phosphate. It participates in carbohydrate biosynthesis; gluconeogenesis. Subject to complex allosteric regulation. The enzyme can assume an active R-state, or an inactive T-state. Intermediate conformations may exist. AMP acts as allosteric inhibitor. AMP binding affects the turnover of bound substrate and not the affinity for substrate. This chain is Fructose-1,6-bisphosphatase (fbp1), found in Schizosaccharomyces pombe (strain 972 / ATCC 24843) (Fission yeast).